A 302-amino-acid polypeptide reads, in one-letter code: Pantothenate synthetase 4 (302 aa).

Residue Met51–His58 coordinates ATP. His58 (proton donor) is an active-site residue. (R)-pantoate is bound at residue Gln82. Beta-alanine is bound at residue Gln82. ATP is bound at residue Gly166–Asp169. A (R)-pantoate-binding site is contributed by Gln172. Residues Ala195 and Arg203–Arg206 contribute to the ATP site.

This sequence belongs to the pantothenate synthetase family. As to quaternary structure, homodimer.

The protein resides in the cytoplasm. The catalysed reaction is (R)-pantoate + beta-alanine + ATP = (R)-pantothenate + AMP + diphosphate + H(+). It functions in the pathway cofactor biosynthesis; (R)-pantothenate biosynthesis; (R)-pantothenate from (R)-pantoate and beta-alanine: step 1/1. Functionally, catalyzes the condensation of pantoate with beta-alanine in an ATP-dependent reaction via a pantoyl-adenylate intermediate. In Frankia alni (strain DSM 45986 / CECT 9034 / ACN14a), this protein is Pantothenate synthetase 4.